Here is a 545-residue protein sequence, read N- to C-terminus: Chaperonin GroEL (545 aa).

Residues 30–33 (TLGP), K51, 87–91 (DGTTT), G415, and D495 contribute to the ATP site.

The protein belongs to the chaperonin (HSP60) family. In terms of assembly, forms a cylinder of 14 subunits composed of two heptameric rings stacked back-to-back. Interacts with the co-chaperonin GroES.

It is found in the cytoplasm. It catalyses the reaction ATP + H2O + a folded polypeptide = ADP + phosphate + an unfolded polypeptide.. Its function is as follows. Together with its co-chaperonin GroES, plays an essential role in assisting protein folding. The GroEL-GroES system forms a nano-cage that allows encapsulation of the non-native substrate proteins and provides a physical environment optimized to promote and accelerate protein folding. The polypeptide is Chaperonin GroEL (Shewanella oneidensis (strain ATCC 700550 / JCM 31522 / CIP 106686 / LMG 19005 / NCIMB 14063 / MR-1)).